We begin with the raw amino-acid sequence, 333 residues long: Holliday junction branch migration complex subunit RuvB (333 aa).

Residues 1-182 are large ATPase domain (RuvB-L); the sequence is MDERLVSGSA…FGVISRLEYY (182 aa). Residues Leu-21, Arg-22, Gly-63, Lys-66, Thr-67, Thr-68, 129–131, Arg-172, Tyr-182, and Arg-219 each bind ATP; that span reads EDY. Thr-67 serves as a coordination point for Mg(2+). Positions 183–253 are small ATPAse domain (RuvB-S); the sequence is QVDQLAQIIE…LAVEALERLQ (71 aa). The interval 256–333 is head domain (RuvB-H); sequence RLGLDHIDHK…AHLGMEVPKR (78 aa). Arg-311 and Arg-316 together coordinate DNA.

It belongs to the RuvB family. As to quaternary structure, homohexamer. Forms an RuvA(8)-RuvB(12)-Holliday junction (HJ) complex. HJ DNA is sandwiched between 2 RuvA tetramers; dsDNA enters through RuvA and exits via RuvB. An RuvB hexamer assembles on each DNA strand where it exits the tetramer. Each RuvB hexamer is contacted by two RuvA subunits (via domain III) on 2 adjacent RuvB subunits; this complex drives branch migration. In the full resolvosome a probable DNA-RuvA(4)-RuvB(12)-RuvC(2) complex forms which resolves the HJ.

The protein resides in the cytoplasm. The catalysed reaction is ATP + H2O = ADP + phosphate + H(+). The RuvA-RuvB-RuvC complex processes Holliday junction (HJ) DNA during genetic recombination and DNA repair, while the RuvA-RuvB complex plays an important role in the rescue of blocked DNA replication forks via replication fork reversal (RFR). RuvA specifically binds to HJ cruciform DNA, conferring on it an open structure. The RuvB hexamer acts as an ATP-dependent pump, pulling dsDNA into and through the RuvAB complex. RuvB forms 2 homohexamers on either side of HJ DNA bound by 1 or 2 RuvA tetramers; 4 subunits per hexamer contact DNA at a time. Coordinated motions by a converter formed by DNA-disengaged RuvB subunits stimulates ATP hydrolysis and nucleotide exchange. Immobilization of the converter enables RuvB to convert the ATP-contained energy into a lever motion, pulling 2 nucleotides of DNA out of the RuvA tetramer per ATP hydrolyzed, thus driving DNA branch migration. The RuvB motors rotate together with the DNA substrate, which together with the progressing nucleotide cycle form the mechanistic basis for DNA recombination by continuous HJ branch migration. Branch migration allows RuvC to scan DNA until it finds its consensus sequence, where it cleaves and resolves cruciform DNA. This Geobacillus thermodenitrificans (strain NG80-2) protein is Holliday junction branch migration complex subunit RuvB.